The sequence spans 71 residues: Large ribosomal subunit protein bL31 (71 aa).

Cys-16, Cys-18, Cys-37, and Cys-40 together coordinate Zn(2+).

Belongs to the bacterial ribosomal protein bL31 family. Type A subfamily. In terms of assembly, part of the 50S ribosomal subunit. Zn(2+) is required as a cofactor.

Functionally, binds the 23S rRNA. The protein is Large ribosomal subunit protein bL31 of Pseudomonas putida (strain GB-1).